The sequence spans 72 residues: Large ribosomal subunit protein bL28 (72 aa).

This sequence belongs to the bacterial ribosomal protein bL28 family.

The sequence is that of Large ribosomal subunit protein bL28 from Chlorobium phaeobacteroides (strain BS1).